Reading from the N-terminus, the 175-residue chain is Apoptosis regulator Bcl-2 homolog (175 aa).

The chain crosses the membrane as a helical span at residues 152 to 174 (YYVTRYFRVAAFIITSLAVINLF).

As to quaternary structure, interacts with host BAK1 and BAX as well as other BH3-containing proteins including BIM, BID or PUMA.

Its subcellular location is the host membrane. Functionally, plays a role in the inhibition of host apoptosis. Interacts with host proapoptotic factors BAK1 and BAX to supposedly prevent their activation. The sequence is that of Apoptosis regulator Bcl-2 homolog (CNPV058) from Canarypox virus (CNPV).